Here is a 161-residue protein sequence, read N- to C-terminus: Allophycocyanin alpha subunit (161 aa).

Cys81 serves as a coordination point for (2R,3E)-phycocyanobilin.

The protein belongs to the phycobiliprotein family. As to quaternary structure, heterodimer of an alpha and a beta chain. In terms of processing, contains one covalently linked phycocyanobilin chromophore. The chromophore on position 81 is added by the phycocyanobilin lyase CpcUS.

It localises to the cellular thylakoid membrane. Light-harvesting photosynthetic bile pigment-protein from the phycobiliprotein complex. Allophycocyanin has a maximum absorption at approximately 650 nanometers. The polypeptide is Allophycocyanin alpha subunit (apcA) (Picosynechococcus sp. (strain ATCC 27264 / PCC 7002 / PR-6) (Agmenellum quadruplicatum)).